Reading from the N-terminus, the 553-residue chain is Undecaprenyl phosphate-alpha-4-amino-4-deoxy-L-arabinose arabinosyl transferase (553 aa).

A run of 12 helical transmembrane segments spans residues 8-28, 81-101, 113-133, 136-156, 176-196, 204-224, 255-275, 289-309, 313-333, 351-371, 384-404, and 412-432; these read LLFS…RALW, FAVR…VYWL, LLSA…SYAV, PMVT…AQSA, LMTK…PWMI, LLLF…PWAI, APFW…VGLL, NSGS…FSLA, LPTY…HHGI, VAFG…WGLV, VLLG…CLVA, and AALC…DKVI.

The protein belongs to the glycosyltransferase 83 family.

It is found in the cell inner membrane. It carries out the reaction 4-amino-4-deoxy-alpha-L-arabinopyranosyl di-trans,octa-cis-undecaprenyl phosphate + lipid IVA = lipid IIA + di-trans,octa-cis-undecaprenyl phosphate.. It functions in the pathway lipopolysaccharide metabolism; 4-amino-4-deoxy-beta-L-arabinose-lipid A biosynthesis. In terms of biological role, catalyzes the transfer of the L-Ara4N moiety of the glycolipid undecaprenyl phosphate-alpha-L-Ara4N to lipid A. The modified arabinose is attached to lipid A and is required for resistance to polymyxin and cationic antimicrobial peptides. In Erwinia tasmaniensis (strain DSM 17950 / CFBP 7177 / CIP 109463 / NCPPB 4357 / Et1/99), this protein is Undecaprenyl phosphate-alpha-4-amino-4-deoxy-L-arabinose arabinosyl transferase.